A 485-amino-acid chain; its full sequence is Glutamyl-tRNA(Gln) amidotransferase subunit A (485 aa).

Active-site charge relay system residues include Lys-79 and Ser-154. Ser-178 (acyl-ester intermediate) is an active-site residue.

It belongs to the amidase family. GatA subfamily. As to quaternary structure, heterotrimer of A, B and C subunits.

It carries out the reaction L-glutamyl-tRNA(Gln) + L-glutamine + ATP + H2O = L-glutaminyl-tRNA(Gln) + L-glutamate + ADP + phosphate + H(+). In terms of biological role, allows the formation of correctly charged Gln-tRNA(Gln) through the transamidation of misacylated Glu-tRNA(Gln) in organisms which lack glutaminyl-tRNA synthetase. The reaction takes place in the presence of glutamine and ATP through an activated gamma-phospho-Glu-tRNA(Gln). The polypeptide is Glutamyl-tRNA(Gln) amidotransferase subunit A (Staphylococcus aureus (strain USA300 / TCH1516)).